We begin with the raw amino-acid sequence, 462 residues long: Glycine--tRNA ligase (462 aa).

Residues arginine 94 and glutamate 143 each coordinate substrate. Residues 175-177 (RNE), 185-190 (FRTCEF), 259-260 (EL), and 308-311 (GLTR) contribute to the ATP site. 190–194 (FEQME) contacts substrate. Residue 304 to 308 (ETSAG) coordinates substrate.

Belongs to the class-II aminoacyl-tRNA synthetase family. Homodimer.

Its subcellular location is the cytoplasm. It carries out the reaction tRNA(Gly) + glycine + ATP = glycyl-tRNA(Gly) + AMP + diphosphate. Catalyzes the attachment of glycine to tRNA(Gly). This is Glycine--tRNA ligase from Treponema pallidum (strain Nichols).